The following is a 221-amino-acid chain: Pyridoxine/pyridoxamine 5'-phosphate oxidase (221 aa).

Residues 1-21 (MDYSDPAELRESYDGAPLDPR) form a disordered region. Residues 10-13 (RESY) and Lys-68 each bind substrate. FMN contacts are provided by residues 63-68 (RTVLLK), 78-79 (FT), Arg-84, Lys-85, and Gln-107. Substrate-binding residues include Tyr-125, Arg-129, and Ser-133. FMN-binding positions include 143–144 (QS) and Trp-189. Position 195–197 (195–197 (RMH)) interacts with substrate. Arg-199 is an FMN binding site.

This sequence belongs to the pyridoxamine 5'-phosphate oxidase family. In terms of assembly, homodimer. The cofactor is FMN.

It carries out the reaction pyridoxamine 5'-phosphate + O2 + H2O = pyridoxal 5'-phosphate + H2O2 + NH4(+). It catalyses the reaction pyridoxine 5'-phosphate + O2 = pyridoxal 5'-phosphate + H2O2. It functions in the pathway cofactor metabolism; pyridoxal 5'-phosphate salvage; pyridoxal 5'-phosphate from pyridoxamine 5'-phosphate: step 1/1. Its pathway is cofactor metabolism; pyridoxal 5'-phosphate salvage; pyridoxal 5'-phosphate from pyridoxine 5'-phosphate: step 1/1. In terms of biological role, catalyzes the oxidation of either pyridoxine 5'-phosphate (PNP) or pyridoxamine 5'-phosphate (PMP) into pyridoxal 5'-phosphate (PLP). The polypeptide is Pyridoxine/pyridoxamine 5'-phosphate oxidase (Thermobifida fusca (strain YX)).